The sequence spans 170 residues: UPF0260 protein RPE_1881 (170 aa).

The protein belongs to the UPF0260 family.

This Rhodopseudomonas palustris (strain BisA53) protein is UPF0260 protein RPE_1881.